A 344-amino-acid polypeptide reads, in one-letter code: Phenylalanine--tRNA ligase alpha subunit (344 aa).

Position 255 (Glu-255) interacts with Mg(2+).

The protein belongs to the class-II aminoacyl-tRNA synthetase family. Phe-tRNA synthetase alpha subunit type 1 subfamily. As to quaternary structure, tetramer of two alpha and two beta subunits. The cofactor is Mg(2+).

It localises to the cytoplasm. The enzyme catalyses tRNA(Phe) + L-phenylalanine + ATP = L-phenylalanyl-tRNA(Phe) + AMP + diphosphate + H(+). The sequence is that of Phenylalanine--tRNA ligase alpha subunit from Cytophaga hutchinsonii (strain ATCC 33406 / DSM 1761 / CIP 103989 / NBRC 15051 / NCIMB 9469 / D465).